Consider the following 329-residue polypeptide: MNNGMQIFDYEDIQMIPNKCVVQSRKEVDTSVKFGPHTFKIPVVPANMQTIIDEPLAIWLAEHDYFYIMHRFQPERRMDFVRDMKKRGLIASISVGVKDDEFDFIEALAANELTPDYITIDIAHGYAQVVIDMIQHIKHYLPNAFVIAGNVGTPEAVRELENAGADATKVGIGPGKVCLTKLKTGFGTGGWQLAAVRWCAKAARKPIIADGGIRNNGDIAKSIRFGATMCMIGSLFAGHEETPGKHVNIDGKEYQEYYGSASEYQKGTHHNVEGKKILLPVKGKIGDTLKEMQEDLQSAVSYAGGRDLESLTKVDYVIVKNSIFNGDQY.

The active-site Thioimidate intermediate is Cys178. NADP(+) is bound at residue 207–230 (IIADGGIRNNGDIAKSIRFGATMC).

The protein belongs to the IMPDH/GMPR family. GuaC type 2 subfamily.

The enzyme catalyses IMP + NH4(+) + NADP(+) = GMP + NADPH + 2 H(+). Its function is as follows. Catalyzes the irreversible NADPH-dependent deamination of GMP to IMP. It functions in the conversion of nucleobase, nucleoside and nucleotide derivatives of G to A nucleotides, and in maintaining the intracellular balance of A and G nucleotides. The chain is GMP reductase from Lacticaseibacillus casei (strain BL23) (Lactobacillus casei).